We begin with the raw amino-acid sequence, 88 residues long: Pigment dispersing factor homolog pdf-1 (88 aa).

The first 21 residues, 1 to 21, serve as a signal peptide directing secretion; the sequence is MNRFIISMIALLAVFCAVSTA.

Its subcellular location is the secreted. In terms of biological role, probable ligand of isoforms a and b of the calcitonin receptor-like protein, pdfr-1, a G-protein coupled receptor. May not signal through isoform c of pdfr-1. Involved in locomotion; more specifically mate searching behavior of males, independent of nutritional status. Involved in regulating the male-specific expression of TGFbeta-like daf-7 in the ASJ chemosensory neurons. Plays a role in circadian rhythms of locomotor activity. Involved in mediating arousal from the sleep-like state called lethargus, which occurs during molting between larval and adult stages, in part by regulating touch sensitivity, and working in concert with neuropeptide flp-2. In the presence of food, plays a role in initiating and extending exploratory roaming behavior, in opposition to 5-hydroxytryptamine (serotonin) signaling. The sequence is that of Pigment dispersing factor homolog pdf-1 from Caenorhabditis elegans.